A 580-amino-acid chain; its full sequence is Glutamine--tRNA ligase (580 aa).

The short motif at 41 to 51 (PEPNGYLHIGH) is the 'HIGH' region element. Residues 42 to 44 (EPN) and 48 to 54 (HIGHAKA) each bind ATP. L-glutamine contacts are provided by D74 and Y218. ATP contacts are provided by residues T237, 285-286 (RL), and 293-295 (MSK). Positions 292–296 (VMSKR) match the 'KMSKS' region motif.

The protein belongs to the class-I aminoacyl-tRNA synthetase family. In terms of assembly, monomer.

It localises to the cytoplasm. It carries out the reaction tRNA(Gln) + L-glutamine + ATP = L-glutaminyl-tRNA(Gln) + AMP + diphosphate. In Xylella fastidiosa (strain Temecula1 / ATCC 700964), this protein is Glutamine--tRNA ligase.